A 71-amino-acid chain; its full sequence is MAVFKVFYQHNKEEVIVREHTQTIYVEAQTEEQVRRYLKDRNFNIEFIAKLEGAHLEYEKQSDHFNVEQAE.

Belongs to the RNA polymerase subunit epsilon family. RNAP is composed of a core of 2 alpha, a beta and a beta' subunit. The core is associated with a delta subunit, and at least one of epsilon or omega. When a sigma factor is associated with the core the holoenzyme is formed, which can initiate transcription.

The catalysed reaction is RNA(n) + a ribonucleoside 5'-triphosphate = RNA(n+1) + diphosphate. In terms of biological role, a non-essential component of RNA polymerase (RNAP). This Staphylococcus saprophyticus subsp. saprophyticus (strain ATCC 15305 / DSM 20229 / NCIMB 8711 / NCTC 7292 / S-41) protein is DNA-directed RNA polymerase subunit epsilon.